Consider the following 141-residue polypeptide: Large ribosomal subunit protein uL11 (141 aa).

Belongs to the universal ribosomal protein uL11 family. As to quaternary structure, part of the ribosomal stalk of the 50S ribosomal subunit. Interacts with L10 and the large rRNA to form the base of the stalk. L10 forms an elongated spine to which L12 dimers bind in a sequential fashion forming a multimeric L10(L12)X complex. One or more lysine residues are methylated.

Forms part of the ribosomal stalk which helps the ribosome interact with GTP-bound translation factors. The sequence is that of Large ribosomal subunit protein uL11 from Geobacter sulfurreducens (strain ATCC 51573 / DSM 12127 / PCA).